A 266-amino-acid polypeptide reads, in one-letter code: Hydroxyethylthiazole kinase (266 aa).

Met-43 contacts substrate. Residues Arg-119 and Thr-166 each contribute to the ATP site. Gly-193 is a substrate binding site.

The protein belongs to the Thz kinase family. The cofactor is Mg(2+).

It carries out the reaction 5-(2-hydroxyethyl)-4-methylthiazole + ATP = 4-methyl-5-(2-phosphooxyethyl)-thiazole + ADP + H(+). It participates in cofactor biosynthesis; thiamine diphosphate biosynthesis; 4-methyl-5-(2-phosphoethyl)-thiazole from 5-(2-hydroxyethyl)-4-methylthiazole: step 1/1. Functionally, catalyzes the phosphorylation of the hydroxyl group of 4-methyl-5-beta-hydroxyethylthiazole (THZ). This chain is Hydroxyethylthiazole kinase, found in Methanococcus vannielii (strain ATCC 35089 / DSM 1224 / JCM 13029 / OCM 148 / SB).